The sequence spans 562 residues: Dihydroxy-acid dehydratase (562 aa).

Aspartate 78 is a binding site for Mg(2+). Position 119 (cysteine 119) interacts with [2Fe-2S] cluster. Mg(2+)-binding residues include aspartate 120 and lysine 121. An N6-carboxylysine modification is found at lysine 121. A [2Fe-2S] cluster-binding site is contributed by cysteine 192. Residue glutamate 449 participates in Mg(2+) binding. Serine 475 functions as the Proton acceptor in the catalytic mechanism.

This sequence belongs to the IlvD/Edd family. In terms of assembly, homodimer. Requires [2Fe-2S] cluster as cofactor. It depends on Mg(2+) as a cofactor.

It carries out the reaction (2R)-2,3-dihydroxy-3-methylbutanoate = 3-methyl-2-oxobutanoate + H2O. The enzyme catalyses (2R,3R)-2,3-dihydroxy-3-methylpentanoate = (S)-3-methyl-2-oxopentanoate + H2O. The protein operates within amino-acid biosynthesis; L-isoleucine biosynthesis; L-isoleucine from 2-oxobutanoate: step 3/4. It participates in amino-acid biosynthesis; L-valine biosynthesis; L-valine from pyruvate: step 3/4. Functionally, functions in the biosynthesis of branched-chain amino acids. Catalyzes the dehydration of (2R,3R)-2,3-dihydroxy-3-methylpentanoate (2,3-dihydroxy-3-methylvalerate) into 2-oxo-3-methylpentanoate (2-oxo-3-methylvalerate) and of (2R)-2,3-dihydroxy-3-methylbutanoate (2,3-dihydroxyisovalerate) into 2-oxo-3-methylbutanoate (2-oxoisovalerate), the penultimate precursor to L-isoleucine and L-valine, respectively. The sequence is that of Dihydroxy-acid dehydratase from Aliarcobacter butzleri (strain RM4018) (Arcobacter butzleri).